Reading from the N-terminus, the 275-residue chain is Phage-like element PBSX protein XkdF (275 aa).

Residues 247-275 are disordered; it reads KARGASKQTADDTGGNTEQVKKSIWSGLL.

It to B.subtilis YqbD.

The sequence is that of Phage-like element PBSX protein XkdF (xkdF) from Bacillus subtilis (strain 168).